The chain runs to 379 residues: Alkanesulfonate monooxygenase (379 aa).

It belongs to the SsuD family.

The catalysed reaction is an alkanesulfonate + FMNH2 + O2 = an aldehyde + FMN + sulfite + H2O + 2 H(+). Its function is as follows. Catalyzes the desulfonation of aliphatic sulfonates. The protein is Alkanesulfonate monooxygenase of Pseudomonas syringae pv. tomato (strain ATCC BAA-871 / DC3000).